Here is a 1035-residue protein sequence, read N- to C-terminus: Valine--tRNA ligase (1035 aa).

Residues 45–55 carry the 'HIGH' region motif; the sequence is PNVTGALHLGH. The stretch at 253 to 281 forms a coiled coil; it reads EKLSDANEKEAVDLNKQIEALQKRREERL. Residue Lys-619 coordinates ATP. The stretch at 967–1035 forms a coiled coil; the sequence is DVEAELARLE…QDILKLQSKK (69 aa).

It belongs to the class-I aminoacyl-tRNA synthetase family. ValS type 1 subfamily. As to quaternary structure, monomer.

The protein resides in the cytoplasm. It catalyses the reaction tRNA(Val) + L-valine + ATP = L-valyl-tRNA(Val) + AMP + diphosphate. In terms of biological role, catalyzes the attachment of valine to tRNA(Val). As ValRS can inadvertently accommodate and process structurally similar amino acids such as threonine, to avoid such errors, it has a 'posttransfer' editing activity that hydrolyzes mischarged Thr-tRNA(Val) in a tRNA-dependent manner. The protein is Valine--tRNA ligase of Rhodopirellula baltica (strain DSM 10527 / NCIMB 13988 / SH1).